The following is an 84-amino-acid chain: Small ribosomal subunit protein bS16 (84 aa).

This sequence belongs to the bacterial ribosomal protein bS16 family.

The protein is Small ribosomal subunit protein bS16 of Burkholderia mallei (strain NCTC 10247).